The sequence spans 1119 residues: DNA-directed RNA polymerase subunit beta (1119 aa).

This sequence belongs to the RNA polymerase beta chain family. In terms of assembly, the RNAP catalytic core consists of 2 alpha, 1 beta, 1 beta' and 1 omega subunit. When a sigma factor is associated with the core the holoenzyme is formed, which can initiate transcription.

The enzyme catalyses RNA(n) + a ribonucleoside 5'-triphosphate = RNA(n+1) + diphosphate. In terms of biological role, DNA-dependent RNA polymerase catalyzes the transcription of DNA into RNA using the four ribonucleoside triphosphates as substrates. The protein is DNA-directed RNA polymerase subunit beta of Thermus thermophilus (strain ATCC 27634 / DSM 579 / HB8).